Here is a 356-residue protein sequence, read N- to C-terminus: Tyrosine recombinase XerS (356 aa).

A Core-binding (CB) domain is found at 16 to 121 (TMPWYILEYY…ALSSLYKYLT (106 aa)). The 186-residue stretch at 169-354 (EFLQYIDTEY…VNDEQKNALD (186 aa)) folds into the Tyr recombinase domain. Catalysis depends on residues R210, K234, H306, R309, and H332. Residue Y341 is the O-(3'-phospho-DNA)-tyrosine intermediate of the active site.

The protein belongs to the 'phage' integrase family. XerS subfamily.

It localises to the cytoplasm. FtsK is required for recombination. In terms of biological role, site-specific tyrosine recombinase, which acts by catalyzing the cutting and rejoining of the recombining DNA molecules. Essential to convert dimers of the bacterial chromosome into monomers to permit their segregation at cell division. The chain is Tyrosine recombinase XerS from Streptococcus sanguinis (strain SK36).